Consider the following 56-residue polypeptide: uncharacterized protein (56 aa).

A helical transmembrane segment spans residues 30-52 (IKIGIICVIITWAIFSINHHHTI).

It is found in the membrane. This is an uncharacterized protein from Dictyostelium discoideum (Social amoeba).